Reading from the N-terminus, the 204-residue chain is Imidazole glycerol phosphate synthase subunit HisH (204 aa).

Residues 1–204 (MIKIVDYGLG…MTLLKNFSEI (204 aa)) form the Glutamine amidotransferase type-1 domain. Cysteine 80 acts as the Nucleophile in catalysis. Active-site residues include histidine 186 and glutamate 188.

Heterodimer of HisH and HisF.

The protein localises to the cytoplasm. It catalyses the reaction 5-[(5-phospho-1-deoxy-D-ribulos-1-ylimino)methylamino]-1-(5-phospho-beta-D-ribosyl)imidazole-4-carboxamide + L-glutamine = D-erythro-1-(imidazol-4-yl)glycerol 3-phosphate + 5-amino-1-(5-phospho-beta-D-ribosyl)imidazole-4-carboxamide + L-glutamate + H(+). The enzyme catalyses L-glutamine + H2O = L-glutamate + NH4(+). Its pathway is amino-acid biosynthesis; L-histidine biosynthesis; L-histidine from 5-phospho-alpha-D-ribose 1-diphosphate: step 5/9. Functionally, IGPS catalyzes the conversion of PRFAR and glutamine to IGP, AICAR and glutamate. The HisH subunit catalyzes the hydrolysis of glutamine to glutamate and ammonia as part of the synthesis of IGP and AICAR. The resulting ammonia molecule is channeled to the active site of HisF. This is Imidazole glycerol phosphate synthase subunit HisH from Bdellovibrio bacteriovorus (strain ATCC 15356 / DSM 50701 / NCIMB 9529 / HD100).